We begin with the raw amino-acid sequence, 1343 residues long: DNA-directed RNA polymerase subunit beta (1343 aa).

This sequence belongs to the RNA polymerase beta chain family. The RNAP catalytic core consists of 2 alpha, 1 beta, 1 beta' and 1 omega subunit. When a sigma factor is associated with the core the holoenzyme is formed, which can initiate transcription.

The enzyme catalyses RNA(n) + a ribonucleoside 5'-triphosphate = RNA(n+1) + diphosphate. Its function is as follows. DNA-dependent RNA polymerase catalyzes the transcription of DNA into RNA using the four ribonucleoside triphosphates as substrates. This Shewanella baltica (strain OS155 / ATCC BAA-1091) protein is DNA-directed RNA polymerase subunit beta.